Here is a 443-residue protein sequence, read N- to C-terminus: MKYLIGIDDHDSYKFGCTTHFSVILTSYLYKNHNTILLDLPYLVRLNPNIPWKTRGNASIKLIVDFNGTKKELADIIFSYSVKYVKNVSLALEHGRRPGIAIIEYDKYKSLFEKLYDFYIKGILDIIPIDYAKKFAEKNDIEIRGDRGIIGSIAALGMSGDYTYELITYRKKENWLKKRMINEDSVKRVDEETFPLTFANYDYINDSPLITPHGNDPILYGIRGTSIEHLIKAMELIESNEDINFFAVFKTNQNTDIHFQKVGNRFYQEIKKVIQIKNIKILEGGDVMIRTTDDDILFVYKETGELNSAAKLLKEGDEIVAYGAIKPSITYGKIIELERFEILKLNDLQLINPKCPICGGPTKSLGKNKGYKCKKCKYIINTANKSMKNIIRNLSLGIYQTRAYRHLTRPIFLTLENNNQSFHEERKFLDMYRSELYKLDYHL.

This sequence belongs to the TiaS family.

It is found in the cytoplasm. The enzyme catalyses cytidine(34) in tRNA(Ile2) + agmatine + ATP + H2O = 2-agmatinylcytidine(34) in tRNA(Ile2) + AMP + 2 phosphate + 2 H(+). Functionally, ATP-dependent agmatine transferase that catalyzes the formation of 2-agmatinylcytidine (agm2C) at the wobble position (C34) of tRNA(Ile2), converting the codon specificity from AUG to AUA. In Saccharolobus islandicus (strain L.S.2.15 / Lassen #1) (Sulfolobus islandicus), this protein is tRNA(Ile2) 2-agmatinylcytidine synthetase TiaS.